A 101-amino-acid polypeptide reads, in one-letter code: Co-chaperonin GroES 1 (101 aa).

The protein belongs to the GroES chaperonin family. In terms of assembly, heptamer of 7 subunits arranged in a ring. Interacts with the chaperonin GroEL.

It is found in the cytoplasm. Its function is as follows. Together with the chaperonin GroEL, plays an essential role in assisting protein folding. The GroEL-GroES system forms a nano-cage that allows encapsulation of the non-native substrate proteins and provides a physical environment optimized to promote and accelerate protein folding. GroES binds to the apical surface of the GroEL ring, thereby capping the opening of the GroEL channel. The sequence is that of Co-chaperonin GroES 1 from Rhodopirellula baltica (strain DSM 10527 / NCIMB 13988 / SH1).